Reading from the N-terminus, the 423-residue chain is Gamma-glutamyl phosphate reductase (423 aa).

Residues M1–Q14 show a composition bias toward low complexity. The disordered stretch occupies residues M1–D25. Residues R15–D25 are compositionally biased toward basic and acidic residues.

This sequence belongs to the gamma-glutamyl phosphate reductase family.

Its subcellular location is the cytoplasm. It catalyses the reaction L-glutamate 5-semialdehyde + phosphate + NADP(+) = L-glutamyl 5-phosphate + NADPH + H(+). The protein operates within amino-acid biosynthesis; L-proline biosynthesis; L-glutamate 5-semialdehyde from L-glutamate: step 2/2. In terms of biological role, catalyzes the NADPH-dependent reduction of L-glutamate 5-phosphate into L-glutamate 5-semialdehyde and phosphate. The product spontaneously undergoes cyclization to form 1-pyrroline-5-carboxylate. The chain is Gamma-glutamyl phosphate reductase from Mycobacterium ulcerans (strain Agy99).